We begin with the raw amino-acid sequence, 114 residues long: Large ribosomal subunit protein uL22 (114 aa).

The protein belongs to the universal ribosomal protein uL22 family. In terms of assembly, part of the 50S ribosomal subunit.

In terms of biological role, this protein binds specifically to 23S rRNA; its binding is stimulated by other ribosomal proteins, e.g. L4, L17, and L20. It is important during the early stages of 50S assembly. It makes multiple contacts with different domains of the 23S rRNA in the assembled 50S subunit and ribosome. Its function is as follows. The globular domain of the protein is located near the polypeptide exit tunnel on the outside of the subunit, while an extended beta-hairpin is found that lines the wall of the exit tunnel in the center of the 70S ribosome. The chain is Large ribosomal subunit protein uL22 from Streptococcus suis (strain 98HAH33).